The sequence spans 280 residues: Putative pyruvate, phosphate dikinase regulatory protein 1 (280 aa).

152-159 is a binding site for ADP; sequence GVSRTSKT.

Belongs to the pyruvate, phosphate/water dikinase regulatory protein family. PDRP subfamily.

The enzyme catalyses N(tele)-phospho-L-histidyl/L-threonyl-[pyruvate, phosphate dikinase] + ADP = N(tele)-phospho-L-histidyl/O-phospho-L-threonyl-[pyruvate, phosphate dikinase] + AMP + H(+). It catalyses the reaction N(tele)-phospho-L-histidyl/O-phospho-L-threonyl-[pyruvate, phosphate dikinase] + phosphate + H(+) = N(tele)-phospho-L-histidyl/L-threonyl-[pyruvate, phosphate dikinase] + diphosphate. In terms of biological role, bifunctional serine/threonine kinase and phosphorylase involved in the regulation of the pyruvate, phosphate dikinase (PPDK) by catalyzing its phosphorylation/dephosphorylation. The polypeptide is Putative pyruvate, phosphate dikinase regulatory protein 1 (Latilactobacillus sakei subsp. sakei (strain 23K) (Lactobacillus sakei subsp. sakei)).